Reading from the N-terminus, the 212-residue chain is uncharacterized protein (212 aa).

S-adenosyl-L-methionine contacts are provided by Gly53, Glu74, and Asp96.

It belongs to the methyltransferase superfamily. YrrT family.

Its function is as follows. Could be a S-adenosyl-L-methionine-dependent methyltransferase. This is an uncharacterized protein from Anoxybacillus flavithermus (strain DSM 21510 / WK1).